We begin with the raw amino-acid sequence, 257 residues long: MSMVETAPSKIQVRNLNFYYGKFHALKNINLDIAKNQVTAFIGPSGCGKSTLLRTFNKMFELYPEQRAEGEILLDGDNILTNSQDIALLRAKVGMVFQKPTPFPMSIYDNIAFGVRLFEKLSRADMDERVQWALTKAALWNETKDKLHQSGYSLSGGQQQRLCIARGIAIRPEVLLLDEPCSALDPISTGRIEELITELKQDYTVVIVTHNMQQAARCSDHTAFMYLGELIEFSNTDDLFTKPAKKQTEDYITGRYG.

The ABC transporter domain maps to isoleucine 11–isoleucine 252. Position 43-50 (glycine 43–serine 50) interacts with ATP.

The protein belongs to the ABC transporter superfamily. Phosphate importer (TC 3.A.1.7) family. As to quaternary structure, the complex is composed of two ATP-binding proteins (PstB), two transmembrane proteins (PstC and PstA) and a solute-binding protein (PstS).

The protein resides in the cell inner membrane. It catalyses the reaction phosphate(out) + ATP + H2O = ADP + 2 phosphate(in) + H(+). Part of the ABC transporter complex PstSACB involved in phosphate import. Responsible for energy coupling to the transport system. The polypeptide is Phosphate import ATP-binding protein PstB (Escherichia coli O6:K15:H31 (strain 536 / UPEC)).